Reading from the N-terminus, the 383-residue chain is Serpin B5 (383 aa).

Asn-106, Asn-133, Asn-176, and Asn-361 each carry an N-linked (GlcNAc...) asparagine glycan.

Belongs to the serpin family. Ov-serpin subfamily.

It localises to the secreted. It is found in the extracellular space. In terms of biological role, may not exhibit serine protease inhibitory activity. In Xenopus laevis (African clawed frog), this protein is Serpin B5 (serpinb5).